A 326-amino-acid chain; its full sequence is Putative HTH-type transcriptional regulatory protein MmarC7_1702 (326 aa).

The HTH cro/C1-type domain occupies 128 to 183 (LRETREKLKISVGELAEISRVSRKTIYKYEQNEANPSAEVAIKIEEYLDVPLIKGI). Positions 139–158 (VGELAEISRVSRKTIYKYEQ) form a DNA-binding region, H-T-H motif.

This Methanococcus maripaludis (strain C7 / ATCC BAA-1331) protein is Putative HTH-type transcriptional regulatory protein MmarC7_1702.